The following is a 1798-amino-acid chain: DNA polymerase II large subunit (1798 aa).

A disordered region spans residues 286-309 (EKGKSSEENKDESKAEDTGTESVA). The 136-residue stretch at 1184 to 1319 (VVGYYLAEGY…ETLLLAKFGI (136 aa)) folds into the DOD-type homing endonuclease domain. A disordered region spans residues 1699–1798 (TGHSNGKNGY…GISLDEFFGS (100 aa)). Low complexity predominate over residues 1714-1731 (GKNGKASKKSGSLASKLS). A compositionally biased stretch (basic and acidic residues) spans 1733–1753 (KGKEPSKKKESAKPKRSEKVK).

This sequence belongs to the archaeal DNA polymerase II family. In terms of assembly, heterodimer of a large subunit and a small subunit. In terms of processing, this protein undergoes a protein self splicing that involves a post-translational excision of the intervening region (intein) followed by peptide ligation.

It catalyses the reaction DNA(n) + a 2'-deoxyribonucleoside 5'-triphosphate = DNA(n+1) + diphosphate. The catalysed reaction is Exonucleolytic cleavage in the 3'- to 5'-direction to yield nucleoside 5'-phosphates.. Functionally, possesses two activities: a DNA synthesis (polymerase) and an exonucleolytic activity that degrades single-stranded DNA in the 3'- to 5'-direction. Has a template-primer preference which is characteristic of a replicative DNA polymerase. The chain is DNA polymerase II large subunit (polC) from Thermococcus kodakarensis (strain ATCC BAA-918 / JCM 12380 / KOD1) (Pyrococcus kodakaraensis (strain KOD1)).